The primary structure comprises 201 residues: MALHDENVVWHSHPVTVQQRELHHGHRGVVLWFTGLSGSGKSTVAGALEEALHKLGVSTYLLDGDNVRHGLCSDLGFSDADRKENIRRVGEVANLMVEAGLVVLTAFISPHRAERQMVRERVGEGRFIEVFVDTPLAICEARDPKGLYKKARAGELRNFTGIDSVYEAPESAEIHLNGEQLVTNLVQQLLDLLRQNDIIRS.

Position 35–42 (35–42) interacts with ATP; sequence GLSGSGKS. S109 serves as the catalytic Phosphoserine intermediate.

Belongs to the APS kinase family.

It catalyses the reaction adenosine 5'-phosphosulfate + ATP = 3'-phosphoadenylyl sulfate + ADP + H(+). The protein operates within sulfur metabolism; hydrogen sulfide biosynthesis; sulfite from sulfate: step 2/3. Functionally, catalyzes the synthesis of activated sulfate. The chain is Adenylyl-sulfate kinase from Escherichia coli O139:H28 (strain E24377A / ETEC).